The chain runs to 535 residues: Xylan 1,3-beta-xylosidase (535 aa).

Catalysis depends on Asp-16, which acts as the Proton acceptor. Glu-189 functions as the Proton donor in the catalytic mechanism.

This sequence belongs to the glycosyl hydrolase 43 family.

The catalysed reaction is Hydrolysis of successive xylose residues from the non-reducing termini of (1-&gt;3)-beta-D-xylans.. Inhibited by Ag(+), Cu(2+), Hg(2+), Mn(2+), Pb(2+), Zn(2+) and p-chloromercuric benzoic acid. Beta-1,3-xylosidase that hydrolyzes beta-1,3-xylooligosaccharides to D-xylose. The protein is Xylan 1,3-beta-xylosidase (xloA) of Vibrio sp.